The following is a 1464-amino-acid chain: ABC transporter G family member 35 (1464 aa).

Residues 1 to 26 form a disordered region; the sequence is MDAAAEMQKVVSLRRGGGGSSSRGAA. In terms of domain architecture, ABC transporter 1 spans 173 to 446; the sequence is ANALGILPNK…FELMGFKCPE (274 aa). 206–213 provides a ligand contact to ATP; sequence GPPGSGKT. One can recognise an ABC transmembrane type-2 1 domain in the interval 524-737; the sequence is ELLKANIDRE…AQNAISVNEF (214 aa). 7 helical membrane passes run 542-562, 575-595, 630-650, 662-682, 686-706, 715-735, and 774-794; these read FVYI…MTVF, GVIF…NGLS, IPMS…VIGF, LLML…GGAA, IVAN…GGFI, WWIW…ISVN, and IGFG…TLAL. The ABC transporter 2 domain maps to 867 to 1119; sequence LTFDNIKYSV…ELIKYFEGIK (253 aa). 912–919 contributes to the ATP binding site; that stretch reads GVSGAGKT. Residues 1192-1406 enclose the ABC transmembrane type-2 2 domain; that stretch reads NQCLACLWKM…TLYGLVASQF (215 aa). The next 7 membrane-spanning stretches (helical) occupy residues 1213-1233, 1243-1263, 1299-1319, 1326-1346, 1356-1376, 1387-1407, and 1436-1456; these read AIRL…FWDL, LFNA…LNSQ, FPYT…MIGF, FFWY…YGMM, VASI…GFII, WYCW…SQFG, and VVAV…GFAI.

This sequence belongs to the ABC transporter superfamily. ABCG family. PDR (TC 3.A.1.205) subfamily.

The protein resides in the membrane. Functionally, may be a general defense protein. This is ABC transporter G family member 35 from Oryza sativa subsp. japonica (Rice).